A 1118-amino-acid polypeptide reads, in one-letter code: cGMP-specific 3',5'-cyclic phosphodiesterase (1118 aa).

The disordered stretch occupies residues 1 to 142 (MTDVSSPAGG…KASTTASQQD (142 aa)). Low complexity predominate over residues 18 to 33 (STTSSSSAATTSASSS). Over residues 34-45 (KPLTNGANKTAI) the composition is skewed to polar residues. 2 stretches are compositionally biased toward low complexity: residues 46–56 (STAAGGVTPGA) and 63–72 (GAIPASSSSG). Over residues 84-101 (SNNNRPAVTNRSSETKLM) the composition is skewed to polar residues. Over residues 102-128 (TPTGSSSSPSQSPSQTQASIQTQTSQQ) the composition is skewed to low complexity. GAF domains are found at residues 247–399 (DIDV…GIGI) and 431–612 (NLEC…GLGI). The region spanning 642-965 (SQDQTEKLTQ…RNWQDLAEKV (324 aa)) is the PDEase domain. The Proton donor role is filled by His718. A divalent metal cation-binding residues include His722, His758, Asp759, and Asp869. Disordered regions lie at residues 1006–1035 (QQSQ…TGAL) and 1065–1118 (SHVS…CALL). Composition is skewed to basic and acidic residues over residues 1011–1022 (GSEDSHTPEHQR) and 1065–1075 (SHVSEDMDDKS). Positions 1084-1104 (ASGSMGRMSASSSTSSAGGQM) are enriched in low complexity. Residues 1108 to 1118 (SKKRSKLCALL) are compositionally biased toward basic residues. Position 1115 is a cysteine methyl ester (Cys1115). A lipid anchor (S-farnesyl cysteine) is attached at Cys1115. A propeptide spans 1116–1118 (ALL) (removed in mature form).

It belongs to the cyclic nucleotide phosphodiesterase family. Interacts with PrBP. Requires a divalent metal cation as cofactor. In terms of tissue distribution, expressed in Malpighian tubule principal cells. Also expressed in adult head.

Its subcellular location is the cell membrane. The catalysed reaction is 3',5'-cyclic GMP + H2O = GMP + H(+). With respect to regulation, inhibited by sildenafil and zaprinast. Hydrolyzes the second messenger cGMP, which is a key regulator of many important physiological processes. Has cAMP phosphodiesterase activity in vitro but not in vivo. Has a role regulating cGMP transport in Malpighian tubule principal cells. The polypeptide is cGMP-specific 3',5'-cyclic phosphodiesterase (Pde6) (Drosophila melanogaster (Fruit fly)).